The primary structure comprises 257 residues: Transmembrane protein 101 (257 aa).

8 consecutive transmembrane segments (helical) span residues 21 to 40, 52 to 72, 77 to 97, 110 to 130, 139 to 159, 182 to 202, 206 to 226, and 233 to 253; these read VLLT…LYAE, VPYL…MSFG, WFAL…YVGG, YSRT…AGEL, SLQS…AYSL, LFFV…YVTL, ILAV…AYWH, and FWNQ…AVIL.

The protein localises to the membrane. In terms of biological role, may activate NF-kappa-B signaling pathways. This is Transmembrane protein 101 (TMEM101) from Bos taurus (Bovine).